A 310-amino-acid polypeptide reads, in one-letter code: CRAL-TRIO domain-containing protein YKL091C (310 aa).

A CRAL-TRIO domain is found at 101-274 (ERIKLAKMYP…KYGGTSVLHN (174 aa)).

The polypeptide is CRAL-TRIO domain-containing protein YKL091C (Saccharomyces cerevisiae (strain ATCC 204508 / S288c) (Baker's yeast)).